Consider the following 130-residue polypeptide: Small ribosomal subunit protein bS16 (130 aa).

Residues 82-130 (VLPKTERNNPKKAVPGKKAQDRAEEKAAKAAEASEAPADEAPAEEAAAE) are disordered. Over residues 99–110 (KAQDRAEEKAAK) the composition is skewed to basic and acidic residues. The span at 118-130 (PADEAPAEEAAAE) shows a compositional bias: acidic residues.

This sequence belongs to the bacterial ribosomal protein bS16 family.

In Dinoroseobacter shibae (strain DSM 16493 / NCIMB 14021 / DFL 12), this protein is Small ribosomal subunit protein bS16.